Consider the following 196-residue polypeptide: Large ribosomal subunit protein uL5 (196 aa).

The protein belongs to the universal ribosomal protein uL5 family. In terms of assembly, part of the 50S ribosomal subunit; part of the 5S rRNA/L5/L18/L25 subcomplex. Contacts the 5S rRNA and the P site tRNA. Forms a bridge to the 30S subunit in the 70S ribosome.

This is one of the proteins that bind and probably mediate the attachment of the 5S RNA into the large ribosomal subunit, where it forms part of the central protuberance. In the 70S ribosome it contacts protein S13 of the 30S subunit (bridge B1b), connecting the 2 subunits; this bridge is implicated in subunit movement. Contacts the P site tRNA; the 5S rRNA and some of its associated proteins might help stabilize positioning of ribosome-bound tRNAs. This Chlorobium phaeobacteroides (strain BS1) protein is Large ribosomal subunit protein uL5.